Reading from the N-terminus, the 95-residue chain is MGLRYSKDVKDRYGDREPEGRIPITLNMPQSLYGRYNCKSCWFANKGLLKCSNHYLCLKCLTLMLRRSDYCGICGEVLPKKLVFENSPSAPPYEA.

The N-myristoyl glycine; by host moiety is linked to residue G2. The RING-type; atypical zinc finger occupies 38 to 74 (CKSCWFANKGLLKCSNHYLCLKCLTLMLRRSDYCGIC). The short motif at 88 to 91 (PSAP) is the PTAP/PSAP motif element.

It belongs to the arenaviridae Z protein family. In terms of assembly, interacts with protein NP; this interaction probably directs the encapsidated genome to budding sites. Interacts (via RING domain) with polymerase L; this interaction inhibits viral transcription and replication, Z partially blocks the product exit tunnel for the releasing nascent RNA product. Interacts with the glycoprotein complex; this interaction plays a role in virion budding. Interacts with host eIF4E; this interaction results in eIF4E reduced affinity for its substrate, the 5'-m7 G cap structure. Interacts (via late-budding domain) with host TSG101; this interaction is essential for budding and release of viral particles. Interacts with host RPLP0; this interaction may serve to load ribosome-like particles inside the virion. Interacts with host PML; this interaction induces PML bodies redistribution in the cytoplasm upon viral infection. In terms of processing, myristoylation is required for the role of RING finger protein Z in assembly and budding.

It is found in the virion. It localises to the host cytoplasm. The protein localises to the host perinuclear region. Its subcellular location is the host cell membrane. Plays a crucial role in virion assembly and budding. Expressed late in the virus life cycle, it acts as an inhibitor of viral transcription and RNA synthesis by interacting with the viral polymerase L. Presumably recruits the NP encapsidated genome to cellular membranes at budding sites via direct interaction with NP. Plays critical roles in the final steps of viral release by interacting with host TSG101, a member of the vacuolar protein-sorting pathway and using other cellular host proteins involved in vesicle formation pathway. The budding of the virus progeny occurs after association of protein Z with the viral glycoprotein complex SSP-GP1-GP2 at the cell periphery, step that requires myristoylation of protein Z. Also selectively represses protein production by associating with host eIF4E. In cell-based minigenome assay, has an inhibitory effect on the ribonucleoprotein machinery (vRNP), which is responsible for the replication and transcription of the viral genome. In Neotoma (wood rats), this protein is RING finger protein Z.